A 175-amino-acid polypeptide reads, in one-letter code: Large ribosomal subunit protein uL10 (175 aa).

The protein belongs to the universal ribosomal protein uL10 family. Part of the ribosomal stalk of the 50S ribosomal subunit. The N-terminus interacts with L11 and the large rRNA to form the base of the stalk. The C-terminus forms an elongated spine to which L12 dimers bind in a sequential fashion forming a multimeric L10(L12)X complex.

Forms part of the ribosomal stalk, playing a central role in the interaction of the ribosome with GTP-bound translation factors. This chain is Large ribosomal subunit protein uL10, found in Halorhodospira halophila (strain DSM 244 / SL1) (Ectothiorhodospira halophila (strain DSM 244 / SL1)).